Here is a 308-residue protein sequence, read N- to C-terminus: Aspartate carbamoyltransferase catalytic subunit (308 aa).

Carbamoyl phosphate is bound by residues Arg57 and Thr58. Lys86 is an L-aspartate binding site. The carbamoyl phosphate site is built by Arg107, His135, and Gln138. Residues Arg167 and Arg228 each contribute to the L-aspartate site. Residues Leu267 and Pro268 each contribute to the carbamoyl phosphate site.

This sequence belongs to the aspartate/ornithine carbamoyltransferase superfamily. ATCase family. Heterooligomer of catalytic and regulatory chains.

It carries out the reaction carbamoyl phosphate + L-aspartate = N-carbamoyl-L-aspartate + phosphate + H(+). It participates in pyrimidine metabolism; UMP biosynthesis via de novo pathway; (S)-dihydroorotate from bicarbonate: step 2/3. Its function is as follows. Catalyzes the condensation of carbamoyl phosphate and aspartate to form carbamoyl aspartate and inorganic phosphate, the committed step in the de novo pyrimidine nucleotide biosynthesis pathway. The sequence is that of Aspartate carbamoyltransferase catalytic subunit from Methanococcoides burtonii (strain DSM 6242 / NBRC 107633 / OCM 468 / ACE-M).